Reading from the N-terminus, the 214-residue chain is A-type ATP synthase subunit D (214 aa).

Belongs to the V-ATPase D subunit family. Has multiple subunits with at least A(3), B(3), C, D, E, F, H, I and proteolipid K(x).

The protein resides in the cell membrane. Functionally, component of the A-type ATP synthase that produces ATP from ADP in the presence of a proton gradient across the membrane. This is A-type ATP synthase subunit D from Thermococcus sibiricus (strain DSM 12597 / MM 739).